We begin with the raw amino-acid sequence, 84 residues long: uncharacterized protein (84 aa).

The chain crosses the membrane as a helical span at residues 13–35; it reads TTLVLTIISTTTTTLFAIIQLYL. Positions 41-84 form a coiled coil; it reads LKDAVKEIVNSELSNLKTEIEELKIKQDELSRQVEEIKRKLDQK.

The protein resides in the host membrane. This is an uncharacterized protein from Sulfolobus islandicus rod-shaped virus 1 (SIRV-1).